The chain runs to 218 residues: MEPGFWHEKWHQQQIGFHQQDINPFLVKYWQQLGLPADTQVFVPLCGKSLDMCFLAEQGHQVIGCELNELAVQHFFSDNQLEMTQTTVGEHQHYHTEQISLYQGDIFTLPKTITQAVTAFYDRAALIAWPESMRAQYAKQLASLLPSGSVGLLVTLDYPQEALSGPPFAVSPTWVEQHLSDDFDIEVLASQDVLADNPRFIKKAVPWLNEAAYLLKRK.

Residues Trp10, Leu45, Glu66, and Arg123 each contribute to the S-adenosyl-L-methionine site.

The protein belongs to the class I-like SAM-binding methyltransferase superfamily. TPMT family.

It localises to the cytoplasm. It catalyses the reaction S-adenosyl-L-methionine + a thiopurine = S-adenosyl-L-homocysteine + a thiopurine S-methylether.. The chain is Thiopurine S-methyltransferase from Shewanella baltica (strain OS185).